Reading from the N-terminus, the 245-residue chain is Putative protein phosphatase 2C-like protein 45 (245 aa).

Positions 1-188 constitute a PPM-type phosphatase domain; sequence MEDRFSTITN…DDISVMLIPL (188 aa).

It belongs to the PP2C family.

The chain is Putative protein phosphatase 2C-like protein 45 from Arabidopsis thaliana (Mouse-ear cress).